Consider the following 128-residue polypeptide: Azurin (128 aa).

In terms of domain architecture, Plastocyanin-like spans 1 to 128 (AECKVTVDST…SMMKGTVTLK (128 aa)). Residues cysteine 3 and cysteine 26 are joined by a disulfide bond. Cu cation contacts are provided by histidine 46, cysteine 112, histidine 117, and methionine 121.

The protein localises to the periplasm. Transfers electrons from cytochrome c551 to cytochrome oxidase. The sequence is that of Azurin from Pseudomonas putida (Arthrobacter siderocapsulatus).